The following is a 1284-amino-acid chain: Kinesin-like protein KIN-4C (1284 aa).

Residues 12–364 (SVKVVVNIRP…LKYANRARNI (353 aa)) enclose the Kinesin motor domain. 91–98 (GQTGSGKT) serves as a coordination point for ATP. Coiled coils occupy residues 407–445 (SAAL…EQLA), 561–711 (RDHS…QFRS), and 911–950 (MCKE…NMLL). 2 disordered regions span residues 1040 to 1070 (RRQT…SQEK) and 1158 to 1284 (MSEK…NHLR). The segment covering 1043 to 1070 (TVSSHLNPNPGSGTTQKSAKSEMASQEK) has biased composition (polar residues). 2 stretches are compositionally biased toward basic and acidic residues: residues 1158–1172 (MSEK…RKPL) and 1275–1284 (NANEKENHLR).

Belongs to the TRAFAC class myosin-kinesin ATPase superfamily. Kinesin family. KIN-4 subfamily. In terms of assembly, homodimer.

Functionally, microtubule-dependent motor protein involved in the control of the oriented deposition of cellulose microfibrils. In Oryza sativa subsp. japonica (Rice), this protein is Kinesin-like protein KIN-4C.